A 227-amino-acid polypeptide reads, in one-letter code: Small ribosomal subunit protein uS5 (227 aa).

The tract at residues 1 to 22 (MSKRSNRSNNKNNTNKFNIENW) is disordered. The segment covering 7–18 (RSNNKNNTNKFN) has biased composition (low complexity). One can recognise an S5 DRBM domain in the interval 63–126 (LEEEVMDVNL…DAAKYNLIKV (64 aa)).

Belongs to the universal ribosomal protein uS5 family. As to quaternary structure, part of the 30S ribosomal subunit. Contacts protein S4.

Functionally, with S4 and S12 plays an important role in translational accuracy. The protein is Small ribosomal subunit protein uS5 of Methanosphaera stadtmanae (strain ATCC 43021 / DSM 3091 / JCM 11832 / MCB-3).